We begin with the raw amino-acid sequence, 95 residues long: MADVLDEVYAVIADRKVNPKEGSYTTSLYNHRKGIDKVLEKIGEESTELIIAAKNGGEKEIVSECADLFFHAMVLLAAKDIPFEKIKEEFERRRK.

It belongs to the PRA-PH family.

The protein localises to the cytoplasm. It catalyses the reaction 1-(5-phospho-beta-D-ribosyl)-ATP + H2O = 1-(5-phospho-beta-D-ribosyl)-5'-AMP + diphosphate + H(+). Its pathway is amino-acid biosynthesis; L-histidine biosynthesis; L-histidine from 5-phospho-alpha-D-ribose 1-diphosphate: step 2/9. This is Phosphoribosyl-ATP pyrophosphatase from Methanocella arvoryzae (strain DSM 22066 / NBRC 105507 / MRE50).